We begin with the raw amino-acid sequence, 187 residues long: Elongation factor P (187 aa).

The protein belongs to the elongation factor P family.

The protein localises to the cytoplasm. It participates in protein biosynthesis; polypeptide chain elongation. Functionally, involved in peptide bond synthesis. Stimulates efficient translation and peptide-bond synthesis on native or reconstituted 70S ribosomes in vitro. Probably functions indirectly by altering the affinity of the ribosome for aminoacyl-tRNA, thus increasing their reactivity as acceptors for peptidyl transferase. In Mycobacterium leprae (strain Br4923), this protein is Elongation factor P.